Here is a 492-residue protein sequence, read N- to C-terminus: GTPase Der (492 aa).

The region spanning Pro-3 to Ala-166 is the EngA-type G 1 domain. GTP contacts are provided by residues Gly-9–Ser-16, Asp-56–Ile-60, and Asn-118–Asp-121. The tract at residues Ala-166–Gly-190 is disordered. A compositionally biased stretch (acidic residues) spans Glu-168 to Glu-181. The 174-residue stretch at Ile-197–Val-370 folds into the EngA-type G 2 domain. Residues Gly-203 to Ser-210, Asp-250 to Val-254, and Asn-315 to Asp-318 each bind GTP. One can recognise a KH-like domain in the interval Thr-371 to Glu-455. The interval Gly-453–Lys-492 is disordered. Over residues Asn-461–Val-470 the composition is skewed to basic and acidic residues. Over residues Asn-471–Lys-492 the composition is skewed to basic residues.

Belongs to the TRAFAC class TrmE-Era-EngA-EngB-Septin-like GTPase superfamily. EngA (Der) GTPase family. In terms of assembly, associates with the 50S ribosomal subunit.

Functionally, GTPase that plays an essential role in the late steps of ribosome biogenesis. This chain is GTPase Der, found in Ectopseudomonas mendocina (strain ymp) (Pseudomonas mendocina).